A 235-amino-acid polypeptide reads, in one-letter code: RING-H2 finger protein ATL33 (235 aa).

The helical transmembrane segment at 64–84 (LIFVVIAFVAVPALVYALFFN) threads the bilayer. The interval 87–133 (CSSSRRNSSSSRTSSSSDDTPHATVDTPPITETTVTSESGGKFHKDT) is disordered. Low complexity predominate over residues 88 to 103 (SSSRRNSSSSRTSSSS). Polar residues predominate over residues 116-125 (ITETTVTSES). Residues 142–184 (CSVCLMVFTDSDELRQLSECKHAFHVLCIETWLKDHPNCPICR) form an RING-type; atypical zinc finger. Residues 201 to 216 (NVNGNVNRSGGNRRVS) are compositionally biased toward low complexity. Residues 201–235 (NVNGNVNRSGGNRRVSATSRDDDWRQGLPDASSLV) are disordered.

It belongs to the RING-type zinc finger family. ATL subfamily.

The protein localises to the membrane. The enzyme catalyses S-ubiquitinyl-[E2 ubiquitin-conjugating enzyme]-L-cysteine + [acceptor protein]-L-lysine = [E2 ubiquitin-conjugating enzyme]-L-cysteine + N(6)-ubiquitinyl-[acceptor protein]-L-lysine.. Its pathway is protein modification; protein ubiquitination. In Arabidopsis thaliana (Mouse-ear cress), this protein is RING-H2 finger protein ATL33 (ATL33).